The chain runs to 299 residues: tRNA-cytidine(32) 2-sulfurtransferase (299 aa).

Positions 49–54 (SGGKDS) match the PP-loop motif motif. [4Fe-4S] cluster is bound by residues cysteine 124, cysteine 127, and cysteine 215.

It belongs to the TtcA family. As to quaternary structure, homodimer. Mg(2+) serves as cofactor. Requires [4Fe-4S] cluster as cofactor.

The protein resides in the cytoplasm. The enzyme catalyses cytidine(32) in tRNA + S-sulfanyl-L-cysteinyl-[cysteine desulfurase] + AH2 + ATP = 2-thiocytidine(32) in tRNA + L-cysteinyl-[cysteine desulfurase] + A + AMP + diphosphate + H(+). It participates in tRNA modification. In terms of biological role, catalyzes the ATP-dependent 2-thiolation of cytidine in position 32 of tRNA, to form 2-thiocytidine (s(2)C32). The sulfur atoms are provided by the cysteine/cysteine desulfurase (IscS) system. The chain is tRNA-cytidine(32) 2-sulfurtransferase from Deinococcus radiodurans (strain ATCC 13939 / DSM 20539 / JCM 16871 / CCUG 27074 / LMG 4051 / NBRC 15346 / NCIMB 9279 / VKM B-1422 / R1).